Here is a 108-residue protein sequence, read N- to C-terminus: ATP-dependent Clp protease adapter protein ClpS (108 aa).

This sequence belongs to the ClpS family. In terms of assembly, binds to the N-terminal domain of the chaperone ClpA.

Involved in the modulation of the specificity of the ClpAP-mediated ATP-dependent protein degradation. The chain is ATP-dependent Clp protease adapter protein ClpS from Ralstonia nicotianae (strain ATCC BAA-1114 / GMI1000) (Ralstonia solanacearum).